Reading from the N-terminus, the 313-residue chain is Biotin synthase (313 aa).

The Radical SAM core domain maps to 28–258 (NFGNDIELCS…LFPQARLRLS (231 aa)). [4Fe-4S] cluster is bound by residues Cys-46, Cys-50, and Cys-53. [2Fe-2S] cluster contacts are provided by Cys-90, Cys-121, Cys-181, and Arg-256.

This sequence belongs to the radical SAM superfamily. Biotin synthase family. In terms of assembly, homodimer. The cofactor is [4Fe-4S] cluster. It depends on [2Fe-2S] cluster as a cofactor.

The catalysed reaction is (4R,5S)-dethiobiotin + (sulfur carrier)-SH + 2 reduced [2Fe-2S]-[ferredoxin] + 2 S-adenosyl-L-methionine = (sulfur carrier)-H + biotin + 2 5'-deoxyadenosine + 2 L-methionine + 2 oxidized [2Fe-2S]-[ferredoxin]. Its pathway is cofactor biosynthesis; biotin biosynthesis; biotin from 7,8-diaminononanoate: step 2/2. Functionally, catalyzes the conversion of dethiobiotin (DTB) to biotin by the insertion of a sulfur atom into dethiobiotin via a radical-based mechanism. The chain is Biotin synthase from Francisella tularensis subsp. mediasiatica (strain FSC147).